Consider the following 195-residue polypeptide: dITP/XTP pyrophosphatase (195 aa).

8–13 (SNNQGK) contacts substrate. Mg(2+) is bound by residues E39 and D68. The active-site Proton acceptor is the D68. Substrate-binding positions include S69, 149-152 (FGYD), K172, and 177-178 (HR).

Belongs to the HAM1 NTPase family. In terms of assembly, homodimer. Mg(2+) is required as a cofactor.

The enzyme catalyses XTP + H2O = XMP + diphosphate + H(+). The catalysed reaction is dITP + H2O = dIMP + diphosphate + H(+). It carries out the reaction ITP + H2O = IMP + diphosphate + H(+). Functionally, pyrophosphatase that catalyzes the hydrolysis of nucleoside triphosphates to their monophosphate derivatives, with a high preference for the non-canonical purine nucleotides XTP (xanthosine triphosphate), dITP (deoxyinosine triphosphate) and ITP. Seems to function as a house-cleaning enzyme that removes non-canonical purine nucleotides from the nucleotide pool, thus preventing their incorporation into DNA/RNA and avoiding chromosomal lesions. The polypeptide is dITP/XTP pyrophosphatase (Staphylococcus aureus (strain COL)).